Here is a 471-residue protein sequence, read N- to C-terminus: Replication factor C large subunit (471 aa).

Residue 44–51 (GSPGIGKT) coordinates ATP. The span at 422–431 (RTDAAVDHSE) shows a compositional bias: basic and acidic residues. The disordered stretch occupies residues 422 to 471 (RTDAAVDHSEGAFAGAVREDNTDEDSAADETTDGDEDTGADSQRGLDEFF). Residues 442-460 (NTDEDSAADETTDGDEDTG) show a composition bias toward acidic residues.

This sequence belongs to the activator 1 small subunits family. RfcL subfamily. In terms of assembly, heteromultimer composed of small subunits (RfcS) and large subunits (RfcL).

Its function is as follows. Part of the RFC clamp loader complex which loads the PCNA sliding clamp onto DNA. The chain is Replication factor C large subunit from Halobacterium salinarum (strain ATCC 29341 / DSM 671 / R1).